The primary structure comprises 68 residues: DNA-directed RNA polymerase subunit omega (68 aa).

It belongs to the RNA polymerase subunit omega family. As to quaternary structure, the RNAP catalytic core consists of 2 alpha, 1 beta, 1 beta' and 1 omega subunit. When a sigma factor is associated with the core the holoenzyme is formed, which can initiate transcription.

The catalysed reaction is RNA(n) + a ribonucleoside 5'-triphosphate = RNA(n+1) + diphosphate. In terms of biological role, promotes RNA polymerase assembly. Latches the N- and C-terminal regions of the beta' subunit thereby facilitating its interaction with the beta and alpha subunits. The protein is DNA-directed RNA polymerase subunit omega of Persephonella marina (strain DSM 14350 / EX-H1).